The primary structure comprises 771 residues: 5-methyltetrahydropteroyltriglutamate--homocysteine methyltransferase (771 aa).

Residues 13 to 16 and lysine 128 each bind 5-methyltetrahydropteroyltri-L-glutamate; that span reads RELK. Residues 451–453 and glutamate 504 each bind L-homocysteine; that span reads IGS. L-methionine contacts are provided by residues 451-453 and glutamate 504; that span reads IGS. 5-methyltetrahydropteroyltri-L-glutamate contacts are provided by residues 535–536 and tryptophan 581; that span reads RC. Residue aspartate 619 participates in L-homocysteine binding. Position 619 (aspartate 619) interacts with L-methionine. Glutamate 625 serves as a coordination point for 5-methyltetrahydropteroyltri-L-glutamate. 3 residues coordinate Zn(2+): histidine 661, cysteine 663, and glutamate 685. Histidine 714 serves as the catalytic Proton donor. Cysteine 746 is a Zn(2+) binding site.

It belongs to the vitamin-B12 independent methionine synthase family. Zn(2+) serves as cofactor.

It catalyses the reaction 5-methyltetrahydropteroyltri-L-glutamate + L-homocysteine = tetrahydropteroyltri-L-glutamate + L-methionine. It participates in amino-acid biosynthesis; L-methionine biosynthesis via de novo pathway; L-methionine from L-homocysteine (MetE route): step 1/1. In terms of biological role, catalyzes the transfer of a methyl group from 5-methyltetrahydrofolate to homocysteine resulting in methionine formation. The chain is 5-methyltetrahydropteroyltriglutamate--homocysteine methyltransferase from Nitrobacter winogradskyi (strain ATCC 25391 / DSM 10237 / CIP 104748 / NCIMB 11846 / Nb-255).